The following is a 196-amino-acid chain: Probable thymidylate kinase (196 aa).

An ATP-binding site is contributed by G7–T14.

It belongs to the thymidylate kinase family.

It carries out the reaction dTMP + ATP = dTDP + ADP. In Archaeoglobus fulgidus (strain ATCC 49558 / DSM 4304 / JCM 9628 / NBRC 100126 / VC-16), this protein is Probable thymidylate kinase (tmk).